The primary structure comprises 393 residues: 1-deoxy-D-xylulose 5-phosphate reductoisomerase (393 aa).

NADPH contacts are provided by Thr10, Gly11, Ser12, Ile13, Arg37, Gln38, and Asn124. Lys125 is a 1-deoxy-D-xylulose 5-phosphate binding site. Glu126 contributes to the NADPH binding site. Asp150 serves as a coordination point for Mn(2+). 1-deoxy-D-xylulose 5-phosphate-binding residues include Ser151, Glu152, Ser179, and His202. Glu152 serves as a coordination point for Mn(2+). Gly208 provides a ligand contact to NADPH. Residues Ser215, Asn220, Lys221, and Glu224 each coordinate 1-deoxy-D-xylulose 5-phosphate. Residue Glu224 coordinates Mn(2+).

It belongs to the DXR family. It depends on Mg(2+) as a cofactor. Mn(2+) is required as a cofactor.

It carries out the reaction 2-C-methyl-D-erythritol 4-phosphate + NADP(+) = 1-deoxy-D-xylulose 5-phosphate + NADPH + H(+). The protein operates within isoprenoid biosynthesis; isopentenyl diphosphate biosynthesis via DXP pathway; isopentenyl diphosphate from 1-deoxy-D-xylulose 5-phosphate: step 1/6. In terms of biological role, catalyzes the NADPH-dependent rearrangement and reduction of 1-deoxy-D-xylulose-5-phosphate (DXP) to 2-C-methyl-D-erythritol 4-phosphate (MEP). This Cupriavidus taiwanensis (strain DSM 17343 / BCRC 17206 / CCUG 44338 / CIP 107171 / LMG 19424 / R1) (Ralstonia taiwanensis (strain LMG 19424)) protein is 1-deoxy-D-xylulose 5-phosphate reductoisomerase.